The chain runs to 415 residues: Multidrug resistance protein MdtA (415 aa).

Residues 1-21 (MKGSYKSRWVIVIVVVIAAIA) form the signal peptide. 2 disordered regions span residues 32-56 (SRSA…GMRA) and 392-415 (EAQS…GARS). Basic and acidic residues predominate over residues 399–415 (SEEKATSREYAKKGARS).

It belongs to the membrane fusion protein (MFP) (TC 8.A.1) family. Part of a tripartite efflux system composed of MdtA, MdtB and MdtC.

The protein resides in the cell inner membrane. The MdtABC tripartite complex confers resistance against novobiocin and deoxycholate. This chain is Multidrug resistance protein MdtA, found in Escherichia coli O7:K1 (strain IAI39 / ExPEC).